A 452-amino-acid chain; its full sequence is MGALTISAKYLIELGFEVQGTVDKPDIIGALFSQTEGLLGSDLDLRELQNTSRIGRIEVEVEHRGDKTVGKVYVPSNLDHYETALIAAMLETVDRVGPYNAKFQVNSIKDLRSEKRKLIIDRAKELIKLIERETIPDTKELMDKFLGEVKQGEVVSYGPEGLPAGPDVESSDTVIIVEGRADVVNLIKHGYRNVIAIEGASGGIPKTVIELSRRKTTIAFTDGDRGGEMILRELLKVADIDYIARAPPGKEVEQLTAKEIAKALRNKIPVEEYINQLSKKDRQIIEESKKQIEQAQVQPSAAPTSPQPQPESTQPTQPIQQVQVTQQTQVIEVPAQTQGQVQVTTMQQSTQQTPQLPTSVVDEINKLSGTLEAIIYDKNWTVLKRVPVRDLLDTLQQVNDAYAIVFDGVGTQRLVDAAVGKGIKMLIMTRIGNIAKVPSDMVILTFNDIINK.

The Toprim domain occupies 172-248 (DTVIIVEGRA…DIDYIARAPP (77 aa)). E178, D222, and D224 together coordinate Mg(2+). Residues 289–320 (KKQIEQAQVQPSAAPTSPQPQPESTQPTQPIQ) form a disordered region. Residues 294-320 (QAQVQPSAAPTSPQPQPESTQPTQPIQ) are compositionally biased toward low complexity.

Belongs to the archaeal DnaG primase family. Forms a ternary complex with MCM helicase and DNA. Component of the archaeal exosome complex. It depends on Mg(2+) as a cofactor.

The catalysed reaction is ssDNA + n NTP = ssDNA/pppN(pN)n-1 hybrid + (n-1) diphosphate.. RNA polymerase that catalyzes the synthesis of short RNA molecules used as primers for DNA polymerase during DNA replication. Also part of the exosome, which is a complex involved in RNA degradation. Acts as a poly(A)-binding protein that enhances the interaction between heteromeric, adenine-rich transcripts and the exosome. The protein is DNA primase DnaG of Caldivirga maquilingensis (strain ATCC 700844 / DSM 13496 / JCM 10307 / IC-167).